Reading from the N-terminus, the 572-residue chain is Hemagglutinin-neuraminidase (572 aa).

Topologically, residues 1–31 are intravirion; sequence MEYWKHTNHGKDAGNELETSMATHGNKLTNK. A helical transmembrane segment spans residues 32–52; that stretch reads ITYILWTIILVLLSIVFIIVL. Residues 53–572 lie on the Virion surface side of the membrane; that stretch reads INSIKSEKAH…FKTEIPKSCS (520 aa). 2 cysteine pairs are disulfide-bonded: cysteine 190-cysteine 214 and cysteine 256-cysteine 269. Residues 252 to 257 form an involved in neuraminidase activity region; it reads NRKSCS. N-linked (GlcNAc...) asparagine; by host glycosylation is found at asparagine 308 and asparagine 351. Disulfide bonds link cysteine 355/cysteine 469 and cysteine 463/cysteine 473. A glycan (N-linked (GlcNAc...) asparagine; by host) is linked at asparagine 523. An intrachain disulfide couples cysteine 535 to cysteine 544.

This sequence belongs to the paramyxoviruses hemagglutinin-neuraminidase family. In terms of assembly, homotetramer; composed of disulfide-linked homodimers. Interacts with F protein trimer.

It is found in the virion membrane. The protein localises to the host cell membrane. It catalyses the reaction Hydrolysis of alpha-(2-&gt;3)-, alpha-(2-&gt;6)-, alpha-(2-&gt;8)- glycosidic linkages of terminal sialic acid residues in oligosaccharides, glycoproteins, glycolipids, colominic acid and synthetic substrates.. Attaches the virus to sialic acid-containing cell receptors and thereby initiating infection. Binding of HN protein to the receptor induces a conformational change that allows the F protein to trigger virion/cell membranes fusion. Functionally, neuraminidase activity ensures the efficient spread of the virus by dissociating the mature virions from the neuraminic acid containing glycoproteins. The chain is Hemagglutinin-neuraminidase (HN) from Homo sapiens (Human).